A 327-amino-acid chain; its full sequence is Meiotic coiled-coil protein 6 (327 aa).

Residues aspartate 66–lysine 188 adopt a coiled-coil conformation. The span at arginine 175 to lysine 199 shows a compositional bias: basic and acidic residues. The interval arginine 175–isoleucine 234 is disordered. A compositionally biased stretch (low complexity) spans serine 202–leucine 212. Positions proline 217–serine 232 are enriched in polar residues. A coiled-coil region spans residues asparagine 243–asparagine 297.

In terms of assembly, interacts with alp4, kms1 and mbo1.

It localises to the nucleus. Its subcellular location is the cytoplasm. The protein resides in the cytoskeleton. It is found in the microtubule organizing center. The protein localises to the spindle pole body. Functionally, has a role in meiotic nuclear oscillation and recombination. Required to remodel astral microtubules into the 'horsetail' astral array maintaining the 'horsetail' nuclear movement. Promotes homologous paring of chromosomes during this movement. This chain is Meiotic coiled-coil protein 6 (mcp6), found in Schizosaccharomyces pombe (strain 972 / ATCC 24843) (Fission yeast).